The chain runs to 62 residues: MPRKAKVVKDLKHFPKYATRQKNRCPICGRPRGFLRRFNMCRLCFREMALSGEITGVRKSSW.

The Zn(2+) site is built by Cys-25, Cys-28, Cys-41, and Cys-44.

It belongs to the universal ribosomal protein uS14 family. Zinc-binding uS14 subfamily. As to quaternary structure, part of the 30S ribosomal subunit. Contacts proteins S3 and S10. Requires Zn(2+) as cofactor.

Functionally, binds 16S rRNA, required for the assembly of 30S particles and may also be responsible for determining the conformation of the 16S rRNA at the A site. In Hydrogenobaculum sp. (strain Y04AAS1), this protein is Small ribosomal subunit protein uS14.